The sequence spans 118 residues: Large ribosomal subunit protein bL20 (118 aa).

The protein belongs to the bacterial ribosomal protein bL20 family.

In terms of biological role, binds directly to 23S ribosomal RNA and is necessary for the in vitro assembly process of the 50S ribosomal subunit. It is not involved in the protein synthesizing functions of that subunit. This chain is Large ribosomal subunit protein bL20, found in Francisella tularensis subsp. holarctica (strain FTNF002-00 / FTA).